The primary structure comprises 534 residues: Serine/threonine-protein phosphatase 2B catalytic subunit (534 aa).

Residues Asp88, His90, and Asp116 each contribute to the Fe cation site. Residues Asp116 and Asn148 each coordinate Zn(2+). His149 serves as the catalytic Proton donor. The Zn(2+) site is built by His197 and His279. Disordered stretches follow at residues 375–398 (LEDE…DVES) and 475–534 (PSHE…TREA). 2 stretches are compositionally biased toward basic and acidic residues: residues 475-497 (PSHE…RAQQ) and 524-534 (QRDAARETREA).

Belongs to the PPP phosphatase family. PP-2B subfamily. As to quaternary structure, composed of two components (A and B), the A component is the catalytic subunit and the B component confers calcium sensitivity. Fe(3+) is required as a cofactor. The cofactor is Zn(2+).

It carries out the reaction O-phospho-L-seryl-[protein] + H2O = L-seryl-[protein] + phosphate. The enzyme catalyses O-phospho-L-threonyl-[protein] + H2O = L-threonyl-[protein] + phosphate. Calcium-dependent, calmodulin-stimulated protein phosphatase. This subunit may have a role in the calmodulin activation of calcineurin. This Aspergillus fumigatus (strain ATCC MYA-4609 / CBS 101355 / FGSC A1100 / Af293) (Neosartorya fumigata) protein is Serine/threonine-protein phosphatase 2B catalytic subunit (cnaA).